The chain runs to 182 residues: Large ribosomal subunit protein uL16 (182 aa).

It belongs to the universal ribosomal protein uL16 family. Part of the 50S ribosomal subunit.

In Thermococcus kodakarensis (strain ATCC BAA-918 / JCM 12380 / KOD1) (Pyrococcus kodakaraensis (strain KOD1)), this protein is Large ribosomal subunit protein uL16.